The sequence spans 174 residues: Auxin-responsive protein IAA2 (174 aa).

An EAR-like (transcriptional repression) motif is present at residues 16 to 20 (LCLGL). Residues 44-67 (FEETRDEEESTPPTKTQIVGWPPV) are disordered. Positions 77–164 (VSYVKVSMDG…SCKRLRIMKG (88 aa)) constitute a PB1 domain.

This sequence belongs to the Aux/IAA family. Homodimers and heterodimers. Interacts with the auxin-responsive protein IAA1. Interacts with TPL. As to expression, preferentially expressed in vegetative organs.

It localises to the nucleus. Its function is as follows. Aux/IAA proteins are short-lived transcriptional factors that function as repressors of early auxin response genes at low auxin concentrations. Repression is thought to result from the interaction with auxin response factors (ARFs), proteins that bind to the auxin-responsive promoter element (AuxRE). Formation of heterodimers with ARF proteins may alter their ability to modulate early auxin response genes expression. The sequence is that of Auxin-responsive protein IAA2 (IAA2) from Arabidopsis thaliana (Mouse-ear cress).